Consider the following 330-residue polypeptide: Aspartate--ammonia ligase (330 aa).

Belongs to the class-II aminoacyl-tRNA synthetase family. AsnA subfamily. As to quaternary structure, homodimer.

The protein localises to the cytoplasm. The enzyme catalyses L-aspartate + NH4(+) + ATP = L-asparagine + AMP + diphosphate + H(+). Its pathway is amino-acid biosynthesis; L-asparagine biosynthesis; L-asparagine from L-aspartate (ammonia route): step 1/1. The chain is Aspartate--ammonia ligase from Salmonella typhi.